Consider the following 455-residue polypeptide: Ribosomal protein uS12 methylthiotransferase RimO (455 aa).

The region spanning Met1–Arg114 is the MTTase N-terminal domain. Cys10, Cys46, Cys78, Cys166, Cys170, and Cys173 together coordinate [4Fe-4S] cluster. In terms of domain architecture, Radical SAM core spans Thr152–Thr383. Residues Gln386 to Ser455 form the TRAM domain.

It belongs to the methylthiotransferase family. RimO subfamily. Requires [4Fe-4S] cluster as cofactor.

The protein resides in the cytoplasm. The enzyme catalyses L-aspartate(89)-[ribosomal protein uS12]-hydrogen + (sulfur carrier)-SH + AH2 + 2 S-adenosyl-L-methionine = 3-methylsulfanyl-L-aspartate(89)-[ribosomal protein uS12]-hydrogen + (sulfur carrier)-H + 5'-deoxyadenosine + L-methionine + A + S-adenosyl-L-homocysteine + 2 H(+). In terms of biological role, catalyzes the methylthiolation of an aspartic acid residue of ribosomal protein uS12. The sequence is that of Ribosomal protein uS12 methylthiotransferase RimO from Chloroflexus aurantiacus (strain ATCC 29366 / DSM 635 / J-10-fl).